The chain runs to 838 residues: Glycogen phosphorylase, brain form (838 aa).

Residue alanine 2 is modified to N-acetylalanine. A Phosphoserine modification is found at serine 15. Aspartate 43, tyrosine 197, and arginine 310 together coordinate AMP. At tyrosine 197 the chain carries Phosphotyrosine. Tyrosine 473 is modified (phosphotyrosine). Serine 524 bears the Phosphoserine mark. Lysine 569 serves as a coordination point for pyridoxal 5'-phosphate. The tract at residues 677-678 (TG) is pyridoxal 5'-phosphate. An N6-(pyridoxal phosphate)lysine modification is found at lysine 681.

Belongs to the glycogen phosphorylase family. Homodimer. Dimers associate into a tetramer to form the enzymatically active phosphorylase A. It depends on pyridoxal 5'-phosphate as a cofactor. In terms of processing, phosphorylation of Ser-15 converts phosphorylase B (unphosphorylated) to phosphorylase A.

The enzyme catalyses [(1-&gt;4)-alpha-D-glucosyl](n) + phosphate = [(1-&gt;4)-alpha-D-glucosyl](n-1) + alpha-D-glucose 1-phosphate. Its activity is regulated as follows. Activity of phosphorylase is controlled both by allosteric means (through the non-covalent binding of metabolites) and by covalent modification. Thus AMP allosterically activates, whereas ATP, ADP, and glucose-6-phosphate allosterically inhibit, phosphorylase B. Its function is as follows. Glycogen phosphorylase that regulates glycogen mobilization. Phosphorylase is an important allosteric enzyme in carbohydrate metabolism. Enzymes from different sources differ in their regulatory mechanisms and in their natural substrates. However, all known phosphorylases share catalytic and structural properties. The sequence is that of Glycogen phosphorylase, brain form (Pygb) from Rattus norvegicus (Rat).